Consider the following 59-residue polypeptide: Protein translocase subunit SecE (59 aa).

Residues 35–55 traverse the membrane as a helical segment; that stretch reads IVAIGIAIIGVVGFIIVLIGE.

This sequence belongs to the SecE/SEC61-gamma family. In terms of assembly, component of the Sec protein translocase complex. Heterotrimer consisting of SecY (alpha), SecG (beta) and SecE (gamma) subunits. The heterotrimers can form oligomers, although 1 heterotrimer is thought to be able to translocate proteins. Interacts with the ribosome. May interact with SecDF, and other proteins may be involved.

The protein localises to the cell membrane. Functionally, essential subunit of the Sec protein translocation channel SecYEG. Clamps together the 2 halves of SecY. May contact the channel plug during translocation. The protein is Protein translocase subunit SecE of Methanobrevibacter smithii (strain ATCC 35061 / DSM 861 / OCM 144 / PS).